Reading from the N-terminus, the 226-residue chain is ATP synthase F(0) complex subunit a (226 aa).

The next 6 membrane-spanning stretches (helical) occupy residues 6 to 26 (FASFAAPTILGLPAAVLIILF), 68 to 88 (WSLMLVSLIIFITTTNLLGLL), 97 to 117 (QLSMNLAMAIPLWAGAVVMGF), 138 to 158 (IPMLVIIETISLLIQPMALAV), 164 to 184 (ITAGHLLMHLIGSATLALSTI), and 189 to 209 (ALIIFTILILLTILEIAVALI).

It belongs to the ATPase A chain family. In terms of assembly, component of the ATP synthase complex composed at least of ATP5F1A/subunit alpha, ATP5F1B/subunit beta, ATP5MC1/subunit c (homooctomer), MT-ATP6/subunit a, MT-ATP8/subunit 8, ATP5ME/subunit e, ATP5MF/subunit f, ATP5MG/subunit g, ATP5MK/subunit k, ATP5MJ/subunit j, ATP5F1C/subunit gamma, ATP5F1D/subunit delta, ATP5F1E/subunit epsilon, ATP5PF/subunit F6, ATP5PB/subunit b, ATP5PD/subunit d, ATP5PO/subunit OSCP. ATP synthase complex consists of a soluble F(1) head domain (subunits alpha(3) and beta(3)) - the catalytic core - and a membrane F(0) domain - the membrane proton channel (subunits c, a, 8, e, f, g, k and j). These two domains are linked by a central stalk (subunits gamma, delta, and epsilon) rotating inside the F1 region and a stationary peripheral stalk (subunits F6, b, d, and OSCP). Interacts with DNAJC30; interaction is direct.

The protein resides in the mitochondrion inner membrane. It catalyses the reaction H(+)(in) = H(+)(out). In terms of biological role, subunit a, of the mitochondrial membrane ATP synthase complex (F(1)F(0) ATP synthase or Complex V) that produces ATP from ADP in the presence of a proton gradient across the membrane which is generated by electron transport complexes of the respiratory chain. ATP synthase complex consist of a soluble F(1) head domain - the catalytic core - and a membrane F(1) domain - the membrane proton channel. These two domains are linked by a central stalk rotating inside the F(1) region and a stationary peripheral stalk. During catalysis, ATP synthesis in the catalytic domain of F(1) is coupled via a rotary mechanism of the central stalk subunits to proton translocation. With the subunit c (ATP5MC1), forms the proton-conducting channel in the F(0) domain, that contains two crucial half-channels (inlet and outlet) that facilitate proton movement from the mitochondrial intermembrane space (IMS) into the matrix. Protons are taken up via the inlet half-channel and released through the outlet half-channel, following a Grotthuss mechanism. This chain is ATP synthase F(0) complex subunit a, found in Pan troglodytes (Chimpanzee).